Reading from the N-terminus, the 119-residue chain is Ribonuclease P protein component (119 aa).

It belongs to the RnpA family. Consists of a catalytic RNA component (M1 or rnpB) and a protein subunit.

The enzyme catalyses Endonucleolytic cleavage of RNA, removing 5'-extranucleotides from tRNA precursor.. Functionally, RNaseP catalyzes the removal of the 5'-leader sequence from pre-tRNA to produce the mature 5'-terminus. It can also cleave other RNA substrates such as 4.5S RNA. The protein component plays an auxiliary but essential role in vivo by binding to the 5'-leader sequence and broadening the substrate specificity of the ribozyme. The protein is Ribonuclease P protein component of Yersinia pseudotuberculosis serotype O:1b (strain IP 31758).